A 691-amino-acid chain; its full sequence is Guanylate cyclase soluble subunit alpha-1 (691 aa).

The disordered stretch occupies residues 26–65; that stretch reads PREPLGEATGSGPASTPGQPGVCPGVPDKNPPGRLPRRKT. Residues 482-609 form the Guanylate cyclase domain; it reads TMLFSDIVGF…NNVTLANKFE (128 aa).

It belongs to the adenylyl cyclase class-4/guanylyl cyclase family. As to quaternary structure, heterodimer of an alpha and a beta chain.

It localises to the cytoplasm. It catalyses the reaction GTP = 3',5'-cyclic GMP + diphosphate. Activated by nitric oxide in the presence of magnesium or manganese ions. In Bos taurus (Bovine), this protein is Guanylate cyclase soluble subunit alpha-1 (GUCY1A1).